The chain runs to 135 residues: Large ribosomal subunit protein uL18 (135 aa).

Residues 1 to 25 are disordered; the sequence is MAQTENQKSKRIPLGKDVSTQRRLS.

Belongs to the universal ribosomal protein uL18 family. In terms of assembly, part of the 50S ribosomal subunit; part of the 5S rRNA/L5/L18/L25 subcomplex. Contacts the 5S and 23S rRNAs.

This is one of the proteins that bind and probably mediate the attachment of the 5S RNA into the large ribosomal subunit, where it forms part of the central protuberance. This chain is Large ribosomal subunit protein uL18, found in Nocardia farcinica (strain IFM 10152).